Here is a 412-residue protein sequence, read N- to C-terminus: Tyrosine--tRNA ligase (412 aa).

The short motif at 56–65 is the 'HIGH' region element; the sequence is PSAPDVHIGH. The short motif at 240 to 244 is the 'KMSKS' region element; it reads KMSKS. Lysine 243 contributes to the ATP binding site. One can recognise an S4 RNA-binding domain in the interval 351–412; the sequence is VWIVDLLVTL…GKRKFKKLVR (62 aa).

Belongs to the class-I aminoacyl-tRNA synthetase family. TyrS type 2 subfamily. Homodimer.

Its subcellular location is the cytoplasm. The catalysed reaction is tRNA(Tyr) + L-tyrosine + ATP = L-tyrosyl-tRNA(Tyr) + AMP + diphosphate + H(+). Catalyzes the attachment of tyrosine to tRNA(Tyr) in a two-step reaction: tyrosine is first activated by ATP to form Tyr-AMP and then transferred to the acceptor end of tRNA(Tyr). This chain is Tyrosine--tRNA ligase, found in Halalkalibacterium halodurans (strain ATCC BAA-125 / DSM 18197 / FERM 7344 / JCM 9153 / C-125) (Bacillus halodurans).